We begin with the raw amino-acid sequence, 681 residues long: Mating-type protein beta1-1 (681 aa).

The segment at residues 165 to 227 (DKNEPTSPTP…DARRRIGWNE (63 aa)) is a DNA-binding region (homeobox; TALE-type). The segment covering 307 to 318 (LKNDEARRKREA) has biased composition (basic and acidic residues). Disordered regions lie at residues 307 to 341 (LKND…SPAS), 353 to 381 (AIDS…SPLC), and 394 to 466 (SPVK…SDPF). The segment covering 413 to 430 (TSAAPSPQPSLLPKLTPT) has biased composition (low complexity).

The protein belongs to the TALE/M-ATYP homeobox family. In terms of assembly, may dimerize.

It is found in the nucleus. In terms of biological role, has a major regulatory role in sexual and asexual development. It may bind DNA itself or it may have a role in preventing DNA-binding of another protein. In Coprinopsis cinerea (Inky cap fungus), this protein is Mating-type protein beta1-1.